Consider the following 330-residue polypeptide: Inactive hydroxysteroid dehydrogenase-like protein 1 (330 aa).

Residue Ala-2 is modified to N-acetylalanine. The interval 2-82 (AAVDSFYLLY…SGATDGIGRA (81 aa)) is required for mitochondria translocation. Residues 74-80 (GATDGIG), Asp-125, and Lys-222 each bind NADP(+).

It belongs to the short-chain dehydrogenases/reductases (SDR) family. 17-beta-HSD 3 subfamily. As to quaternary structure, interacts with STYXL1.

The protein localises to the mitochondrion. The polypeptide is Inactive hydroxysteroid dehydrogenase-like protein 1 (HSDL1) (Pongo abelii (Sumatran orangutan)).